The following is a 175-amino-acid chain: NADH-quinone oxidoreductase subunit I (175 aa).

4Fe-4S ferredoxin-type domains follow at residues 69–98 (KRDE…IEAA) and 115–144 (KKFE…LDGT). [4Fe-4S] cluster-binding residues include Cys-78, Cys-81, Cys-84, Cys-88, Cys-124, Cys-127, Cys-130, and Cys-134.

This sequence belongs to the complex I 23 kDa subunit family. As to quaternary structure, NDH-1 is composed of 14 different subunits. Subunits NuoA, H, J, K, L, M, N constitute the membrane sector of the complex. Requires [4Fe-4S] cluster as cofactor.

The protein resides in the cell inner membrane. It catalyses the reaction a quinone + NADH + 5 H(+)(in) = a quinol + NAD(+) + 4 H(+)(out). In terms of biological role, NDH-1 shuttles electrons from NADH, via FMN and iron-sulfur (Fe-S) centers, to quinones in the respiratory chain. The immediate electron acceptor for the enzyme in this species is believed to be ubiquinone. Couples the redox reaction to proton translocation (for every two electrons transferred, four hydrogen ions are translocated across the cytoplasmic membrane), and thus conserves the redox energy in a proton gradient. This Leptospira biflexa serovar Patoc (strain Patoc 1 / Ames) protein is NADH-quinone oxidoreductase subunit I.